Here is a 637-residue protein sequence, read N- to C-terminus: MNTYAAYIDYALKKLDTFPVDMTGGNDNTVLLKDYQLFVAKVFLGLNSMNSILLFQETGVGKTITTVYMLKNLKKIYSEWTIIILVKKALIDDPWTHTILDYAPEVMKDCIIMNYDDQNFHNKFFTNIKSINVKSRIFIIIDECHNFISKSLTKEDNKKRNTKLVYNYIAKNLMQKNNKLICLSATPIVNDVREFQMLVNLLRPGILTPDKSLFYNKKLIDEKEIISKLGCICSYIVNNEASIFEDVENTTLFAKKTVHIKHVFMSKKQEELYLKARYLERKLGISVFKIYQRMASTFVFDDIPDKKKLTEEEYEKFVDSLSIDFKNTLYGKKISKQSLDILSAGGTINDIKDVKDIELYNYLYEHSCKFTFVCVSIIQSKGKCLVFEPFIRSSGIEILLQYFNVFGITYIEFSSRTKDIRSKSVSDFNKVDNTDGEITKVCVFSQSGNEGISFLSINDIFILDMTWNEASLKQIIGRAIRLNSHVNNPPERRYVNVYFVVAKLSSGRSSVDDILLDIIQSKSKEFSQLYKVFKHSSIEWIYSNYTDFQTVDDEKGFKKLISRNIILDENTITNKKKLTMGENIWYSFSSSLVSIHRGFKSMDNKIYDSEGFFITVLPDKPTIKIYEGKLIYILTVR.

The Helicase ATP-binding domain occupies 43 to 205 (FLGLNSMNSI…QMLVNLLRPG (163 aa)). 56–63 (QETGVGKT) serves as a coordination point for ATP. The short motif at 142–145 (DECH) is the DEXH box element. One can recognise a Helicase C-terminal domain in the interval 358-537 (ELYNYLYEHS…QLYKVFKHSS (180 aa)). The tract at residues 459 to 526 (DIFILDMTWN…DIIQSKSKEF (68 aa)) is binding to the cap-specific mRNA (nucleoside-2'-O-)-methyltransferase.

The protein belongs to the helicase family. NPH I subfamily. In terms of assembly, monomer. Interacts (via C-terminus) with RAP94 (via N-terminus). Interacts with the cap-specific mRNA (nucleoside-2'-O-)-methyltransferase.

The protein resides in the virion. The catalysed reaction is a ribonucleoside 5'-triphosphate + H2O = a ribonucleoside 5'-diphosphate + phosphate + H(+). Its function is as follows. DNA-dependent ATPase required for providing the needed energy to achieve the termination of early transcripts. Acts in concert with the RAP94 subunit of the virion RNA polymerase and the capping enzyme/VTF to catalyze release of UUUUUNU-containing nascent RNA from the elongation complex. NPH-I must bind ssDNA in order to exhibit ATPase activity. The protein is Nucleoside triphosphatase I (NPH1) of Vertebrata (FPV).